A 64-amino-acid polypeptide reads, in one-letter code: Large ribosomal subunit protein bL33 (64 aa).

Positions 16-25 (EARTSSEPRR) are enriched in basic and acidic residues. A disordered region spans residues 16-39 (EARTSSEPRRSNGISRYTTEKNKR).

This sequence belongs to the bacterial ribosomal protein bL33 family.

The protein is Large ribosomal subunit protein bL33 of Prochlorococcus marinus (strain MIT 9515).